Reading from the N-terminus, the 361-residue chain is Alanine racemase (361 aa).

Lysine 34 acts as the Proton acceptor; specific for D-alanine in catalysis. At lysine 34 the chain carries N6-(pyridoxal phosphate)lysine. Residue arginine 129 participates in substrate binding. Residue tyrosine 254 is the Proton acceptor; specific for L-alanine of the active site. Methionine 302 lines the substrate pocket.

This sequence belongs to the alanine racemase family. It depends on pyridoxal 5'-phosphate as a cofactor.

The catalysed reaction is L-alanine = D-alanine. It carries out the reaction L-serine = D-serine. The protein operates within amino-acid biosynthesis; D-alanine biosynthesis; D-alanine from L-alanine: step 1/1. Catalyzes the interconversion of L-alanine and D-alanine. Likely plays an important role in supplying D-alanine, which is an indispensable constituent in the biosynthesis of bacterial cell-wall peptidoglycan. To a lesser extent, is also able to racemize L-serine and D-serine. Does not act on other proteinogenic amino-acids. This Vibrio cholerae serotype O1 (strain ATCC 39315 / El Tor Inaba N16961) protein is Alanine racemase (alr1).